A 299-amino-acid chain; its full sequence is Ribosomal RNA small subunit methyltransferase H (299 aa).

S-adenosyl-L-methionine contacts are provided by residues 36 to 38, Asp55, Tyr82, Asp103, and Gln110; that span reads GGH. 2 stretches are compositionally biased toward basic and acidic residues: residues 269–282 and 289–299; these read PVRPSEEEIRENPR and RAAERIEEGGD. Residues 269 to 299 are disordered; that stretch reads PVRPSEEEIRENPRARSGRLRAAERIEEGGD.

The protein belongs to the methyltransferase superfamily. RsmH family.

It localises to the cytoplasm. The catalysed reaction is cytidine(1402) in 16S rRNA + S-adenosyl-L-methionine = N(4)-methylcytidine(1402) in 16S rRNA + S-adenosyl-L-homocysteine + H(+). Its function is as follows. Specifically methylates the N4 position of cytidine in position 1402 (C1402) of 16S rRNA. The protein is Ribosomal RNA small subunit methyltransferase H of Thermotoga maritima (strain ATCC 43589 / DSM 3109 / JCM 10099 / NBRC 100826 / MSB8).